The following is an 806-amino-acid chain: MTPSTSHISSQLRQLIYYHLDNNLARNALFLAGRLHAYEPRTSEASYLLALCYLQNGQVKAAWETSKHFGSRGAHLGCSYVYAQACLDLGKYTDGINALERSKGQWTSRNHWNKHSETRRQHLPDAAAVLCLQGKLWQAHKEHNKAVECYAAALKLNPFMWDAFLNLCETGVDLRVSNIYKMSPELYSMVSSAALEDVESQVLPPDGPLQTQVNPNPSLDPFTAGTTRSDSTSTHGSSALWEKLNGSTVSVASSGTGPHLPREGMETPGGQSSESDDPRVTNGNGTDVFEPPLAPAKKNRTIQTIGGDHPMDPPPKMRPTGIRPRTRTKFESDEGHTERDAGMGHRLGDRKRTVSGQVAHPSVPHSTDQGVGQRRSVRLFNQIKPSTNKISSTALGVKEGREVKKVRTTGNKARTTTSSNVGRVVSGNNRRHAGEIHDGDSKEYRGTSSTSNGSQNASSKLAISERTKSVEALAWILDLFFKIASGYFCLSRYKCSDAIQIFSSLSQGQRETPWVLAQIGRAYYEQAMYTEAEKYFVRVKAMAPSRLEDMEIYSTVLWHLKNDVELAYLAHELMDVDRLSPEAWCAVGNSFSHQRDHDQALKCFKRATQLDPHFAYGFTLQGHEYVANEEYDKALDAYRSGINADSRHYNAWYGLGTVYDKMGKLDFAEQHFRNAAKINPSNAVLICCIGLVLEKMNNPKSALIQYNRACTLAPHSVLARFRKARALMKLQDLKSALTELKVLKDMAPDEANVHYLLGKLYKMLRDKGNAIKHFTTALNLDPKAAQYIKDAMEALDDDEEDEEDMA.

TPR repeat units lie at residues 76 to 109 and 127 to 160; these read LGCS…WTSR and AAVL…NPFM. Disordered regions lie at residues 202–348, 353–372, and 401–460; these read VLPP…HRLG, TVSG…QGVG, and REVK…ASSK. Over residues 224–237 the composition is skewed to polar residues; sequence AGTTRSDSTSTHGS. Positions 246 to 257 are enriched in low complexity; that stretch reads GSTVSVASSGTG. The bimA domain stretch occupies residues 260 to 399; the sequence is LPREGMETPG…ISSTALGVKE (140 aa). The segment covering 328–348 has biased composition (basic and acidic residues); it reads TKFESDEGHTERDAGMGHRLG. Polar residues predominate over residues 408 to 421; sequence TTGNKARTTTSSNV. Residues 432 to 445 show a composition bias toward basic and acidic residues; the sequence is HAGEIHDGDSKEYR. Low complexity predominate over residues 446-459; the sequence is GTSSTSNGSQNASS. 6 TPR repeats span residues 513 to 546, 581 to 614, 616 to 648, 649 to 682, 684 to 716, and 751 to 784; these read PWVL…APSR, PEAW…DPHF, YGFT…DSRH, YNAW…NPSN, VLIC…APHS, and ANVH…DPKA.

Belongs to the APC3/CDC27 family.

It is found in the nucleus. Required for the completion of mitosis in Aspergillus nidulans. This is Protein bimA (bimA) from Emericella nidulans (strain FGSC A4 / ATCC 38163 / CBS 112.46 / NRRL 194 / M139) (Aspergillus nidulans).